The primary structure comprises 283 residues: Spore coat polysaccharide biosynthesis protein SpsK (283 aa).

Belongs to the dTDP-4-dehydrorhamnose reductase family.

Its pathway is spore coat biogenesis; spore coat polysaccharide biosynthesis. The protein is Spore coat polysaccharide biosynthesis protein SpsK (spsK) of Bacillus subtilis (strain 168).